A 137-amino-acid polypeptide reads, in one-letter code: MVSMKEFIGRWKLVHSENFEEYLKEIGVGLLIRKAASLTSPTLEIKLDGDTWHFNQYSTFKNNKLAFKIREKFVEIAPDERSYNTLVTFENGKFISHQDKIKENHHSSVFTTWLENGKLLQTYQSGSVICRREFVKE.

A Nuclear localization signal motif is present at residues 24–34 (KEIGVGLLIRK).

It belongs to the calycin superfamily. Fatty-acid binding protein (FABP) family. As to quaternary structure, monomer. In terms of tissue distribution, intestine.

The protein resides in the lysosome. It is found in the nucleus. In terms of biological role, lysosomal lipid chaperone which binds to a wide range of unsaturated fatty acids, including high affinity binding to oleic acid and oleoylethanolamide, to transport them into the nucleus. As part of a lysosome-to-nucleus retrograde lipid signaling pathway, translocates into the nucleus where it activates the transcription of genes promoting longevity and activation of mitochondrial beta oxidation. The polypeptide is Fatty acid-binding protein homolog 8 (Caenorhabditis elegans).